We begin with the raw amino-acid sequence, 82 residues long: Putative membrane protein insertion efficiency factor (82 aa).

Belongs to the UPF0161 family.

The protein localises to the cell inner membrane. In terms of biological role, could be involved in insertion of integral membrane proteins into the membrane. The protein is Putative membrane protein insertion efficiency factor of Aeromonas salmonicida (strain A449).